Consider the following 442-residue polypeptide: Endothelin receptor type B (442 aa).

Residues 1–26 (MQSSASRCGRALVALLLACGLLGVWG) form the signal peptide. Residues 27 to 101 (EKRGFPPAQA…RKIEINKTFK (75 aa)) lie on the Extracellular side of the membrane. 2 N-linked (GlcNAc...) asparagine glycosylation sites follow: asparagine 60 and asparagine 97. Residues 102–126 (YINTIVSCLVFVLGIIGNSTLLRII) traverse the membrane as a helical segment. At 127 to 137 (YKNKCMRNGPN) the chain is on the cytoplasmic side. The chain crosses the membrane as a helical span at residues 138 to 163 (ILIASLALGDLLHIIIDIPINAYKLL). Over 164 to 175 (AGDWPFGAEMCK) the chain is Extracellular. Cysteine 174 and cysteine 255 are joined by a disulfide. The helical transmembrane segment at 176–197 (LVPFIQKASVGITVLSLCALSI) threads the bilayer. The Cytoplasmic segment spans residues 198–218 (DRYRAVASWSRIKGIGVPKWT). A helical transmembrane segment spans residues 219–243 (AVEIVLIWVVSVVLAVPEAIGFDVI). The Extracellular portion of the chain corresponds to 244-271 (TSDYKGKPLRVCMLNPFQKTAFMQFYKT). The chain crosses the membrane as a helical span at residues 272 to 296 (AKDWWLFSFYFCLPLAITAIFYTLM). The Cytoplasmic portion of the chain corresponds to 297-324 (TCEMLRKKSGMQIALNDHLKQRREVAKT). At serine 305 the chain carries Phosphoserine. The chain crosses the membrane as a helical span at residues 325-350 (VFCLVLVFALCWLPLHLSRILKLTLY). At 351–362 (DQSNPQRCELLS) the chain is on the extracellular side. Residues 363–389 (FLLVLDYIGINMASLNSCINPIALYLV) traverse the membrane as a helical segment. The Cytoplasmic segment spans residues 390 to 442 (SKRFKNCFKSCLCCWCQTFEEKQSLEEKQSCLKFKANDHGYDNFRSSNKYSSS). S-palmitoyl cysteine attachment occurs at residues cysteine 402, cysteine 403, and cysteine 405. Serine 419 carries the phosphoserine modification. At tyrosine 439 the chain carries Phosphotyrosine. Serine 440, serine 441, and serine 442 each carry phosphoserine.

The protein belongs to the G-protein coupled receptor 1 family. Endothelin receptor subfamily. EDNRB sub-subfamily. Widely distributed in cell types of a variety of tissues.

Its subcellular location is the cell membrane. Functionally, non-specific receptor for endothelin 1, 2, and 3. Mediates its action by association with G proteins that activate a phosphatidylinositol-calcium second messenger system. The sequence is that of Endothelin receptor type B from Rattus norvegicus (Rat).